Reading from the N-terminus, the 547-residue chain is Probable acetolactate synthase (547 aa).

Glu-57 provides a ligand contact to thiamine diphosphate. FAD is bound by residues Pro-159 and 299–318 (DRVEPAREHPRPVAAGLYGD). Residues 388–468 (DFGSYAGRMI…VVSVIGNNGI (81 aa)) are thiamine pyrophosphate binding. Mg(2+)-binding residues include Asp-439 and Asn-466.

The protein belongs to the TPP enzyme family. The cofactor is Mg(2+). Thiamine diphosphate is required as a cofactor.

The enzyme catalyses 2 pyruvate + H(+) = (2S)-2-acetolactate + CO2. Its pathway is amino-acid biosynthesis; L-isoleucine biosynthesis; L-isoleucine from 2-oxobutanoate: step 1/4. The protein operates within amino-acid biosynthesis; L-valine biosynthesis; L-valine from pyruvate: step 1/4. In Mycobacterium bovis (strain ATCC BAA-935 / AF2122/97), this protein is Probable acetolactate synthase (ilvG).